The chain runs to 149 residues: VapC ribonuclease PF0355 (149 aa).

The PINc domain maps to 8-122; it reads TFDSLALIKM…ITDDSKRYEP (115 aa). Residues Asp10 and Asp98 each contribute to the Mg(2+) site.

Belongs to the PINc/VapC protein family. The cofactor is Mg(2+).

Its function is as follows. Toxic component of a type II toxin-antitoxin (TA) system. An RNase. The protein is VapC ribonuclease PF0355 of Pyrococcus furiosus (strain ATCC 43587 / DSM 3638 / JCM 8422 / Vc1).